Consider the following 794-residue polypeptide: Phenylalanine--tRNA ligase beta subunit (794 aa).

Residues 40–158 enclose the tRNA-binding domain; the sequence is NSLNSELILG…LKKYIGSDVK (119 aa). Residues 402-477 enclose the B5 domain; the sequence is KNKQSLEIKL…RLYSYDKIDE (76 aa). Mg(2+) contacts are provided by aspartate 455, aspartate 461, glutamate 464, and glutamate 465. The 93-residue stretch at 702-794 folds into the FDX-ACB domain; the sequence is SKFQSSSRDL…NIKQMKVVIR (93 aa).

It belongs to the phenylalanyl-tRNA synthetase beta subunit family. Type 1 subfamily. Tetramer of two alpha and two beta subunits. It depends on Mg(2+) as a cofactor.

It localises to the cytoplasm. The enzyme catalyses tRNA(Phe) + L-phenylalanine + ATP = L-phenylalanyl-tRNA(Phe) + AMP + diphosphate + H(+). The protein is Phenylalanine--tRNA ligase beta subunit of Mycoplasma mycoides subsp. mycoides SC (strain CCUG 32753 / NCTC 10114 / PG1).